An 832-amino-acid chain; its full sequence is Leucine--tRNA ligase (832 aa).

Residues 58–68 carry the 'HIGH' region motif; sequence PYPSGDLHMGH. The 'KMSKS' region motif lies at 598–602; it reads AMSKS. K601 is an ATP binding site.

It belongs to the class-I aminoacyl-tRNA synthetase family.

It is found in the cytoplasm. The enzyme catalyses tRNA(Leu) + L-leucine + ATP = L-leucyl-tRNA(Leu) + AMP + diphosphate. The polypeptide is Leucine--tRNA ligase (Acidothermus cellulolyticus (strain ATCC 43068 / DSM 8971 / 11B)).